A 237-amino-acid chain; its full sequence is Protein GrpE (237 aa).

Disordered regions lie at residues 24–56 (LILE…KQLQ) and 204–237 (SAGS…PQPS).

It belongs to the GrpE family. In terms of assembly, homodimer.

The protein localises to the cytoplasm. Functionally, participates actively in the response to hyperosmotic and heat shock by preventing the aggregation of stress-denatured proteins, in association with DnaK and GrpE. It is the nucleotide exchange factor for DnaK and may function as a thermosensor. Unfolded proteins bind initially to DnaJ; upon interaction with the DnaJ-bound protein, DnaK hydrolyzes its bound ATP, resulting in the formation of a stable complex. GrpE releases ADP from DnaK; ATP binding to DnaK triggers the release of the substrate protein, thus completing the reaction cycle. Several rounds of ATP-dependent interactions between DnaJ, DnaK and GrpE are required for fully efficient folding. This is Protein GrpE from Synechococcus sp. (strain JA-2-3B'a(2-13)) (Cyanobacteria bacterium Yellowstone B-Prime).